We begin with the raw amino-acid sequence, 387 residues long: MTVLKMTDLDLQGKRVLIREDLNVPVKDGVVASDARILAALPTIKLALEKGAAVMVCSHLGRPTEGEFSAENSLKPVADYLSKALGRDVPLVADYLDGVSVQAGELVLFENVRFNKGEKKNADELAQKYAALCDVFVMDAFGTAHRAEGSTHGVAKFAKVAAAGPLLAAELDALGKALKAPAKPMAAIVAGSKVSTKLDVLNSLSSVCDQLIVGGGIANTFLAAAGHPVGKSLYEPDLVDTAKAIAAKVSVPLPVDVVVAKEFAETAEATVKAIADVAADDMILDIGPQTAANFAELLKSSKTILWNGPVGVFEFDQFGNGTKVLAKAIADSAAFSIAGGGDTLAAIDKYGVSKEISYISTGGGAFLEFVEGKVLPAVAILEERAKA.

Substrate contacts are provided by residues 21–23, R36, 59–62, R113, and R146; these read DLN and HLGR. ATP is bound by residues K197, E314, and 340-343; that span reads GGDT.

The protein belongs to the phosphoglycerate kinase family. Monomer.

Its subcellular location is the cytoplasm. It catalyses the reaction (2R)-3-phosphoglycerate + ATP = (2R)-3-phospho-glyceroyl phosphate + ADP. It functions in the pathway carbohydrate degradation; glycolysis; pyruvate from D-glyceraldehyde 3-phosphate: step 2/5. In Pseudomonas putida (strain GB-1), this protein is Phosphoglycerate kinase.